The primary structure comprises 129 residues: Follitropin subunit beta (129 aa).

Positions M1–G20 are cleaved as a signal peptide. Cystine bridges form between C21-C69, C35-C84, C38-C122, C46-C100, C50-C102, and C105-C112. Residues N25 and N42 are each glycosylated (N-linked (GlcNAc...) asparagine).

The protein belongs to the glycoprotein hormones subunit beta family. As to quaternary structure, heterodimer. The active follitropin is a heterodimer composed of an alpha chain/CGA shared with other hormones and a unique beta chain/FSHB shown here.

The protein localises to the secreted. Together with the alpha chain CGA constitutes follitropin, the follicle-stimulating hormone, and provides its biological specificity to the hormone heterodimer. Binds FSHR, a G protein-coupled receptor, on target cells to activate downstream signaling pathways. Follitropin is involved in follicle development and spermatogenesis in reproductive organs. The chain is Follitropin subunit beta (FSHB) from Trichosurus vulpecula (Brush-tailed possum).